The chain runs to 728 residues: Fatty acid oxidation complex subunit alpha (728 aa).

The tract at residues 1 to 189 is enoyl-CoA hydratase/isomerase; sequence MLYQSETIQV…KNGLIDAVVP (189 aa). Residue Asp-296 coordinates substrate. Residues 311–728 are 3-hydroxyacyl-CoA dehydrogenase; it reads TIPEYAAVLG…TIAVSTGKTA (418 aa). NAD(+) contacts are provided by residues Met-324, Asp-343, 400-402, Lys-407, and Ser-429; that span reads VVE. His-450 (for 3-hydroxyacyl-CoA dehydrogenase activity) is an active-site residue. Asn-453 contacts NAD(+). Substrate-binding residues include Asn-500 and Tyr-660.

This sequence in the N-terminal section; belongs to the enoyl-CoA hydratase/isomerase family. It in the C-terminal section; belongs to the 3-hydroxyacyl-CoA dehydrogenase family. In terms of assembly, heterotetramer of two alpha chains (FadB) and two beta chains (FadA).

It carries out the reaction a (3S)-3-hydroxyacyl-CoA + NAD(+) = a 3-oxoacyl-CoA + NADH + H(+). The enzyme catalyses a (3S)-3-hydroxyacyl-CoA = a (2E)-enoyl-CoA + H2O. It catalyses the reaction a 4-saturated-(3S)-3-hydroxyacyl-CoA = a (3E)-enoyl-CoA + H2O. The catalysed reaction is (3S)-3-hydroxybutanoyl-CoA = (3R)-3-hydroxybutanoyl-CoA. It carries out the reaction a (3Z)-enoyl-CoA = a 4-saturated (2E)-enoyl-CoA. The enzyme catalyses a (3E)-enoyl-CoA = a 4-saturated (2E)-enoyl-CoA. It functions in the pathway lipid metabolism; fatty acid beta-oxidation. Its function is as follows. Involved in the aerobic and anaerobic degradation of long-chain fatty acids via beta-oxidation cycle. Catalyzes the formation of 3-oxoacyl-CoA from enoyl-CoA via L-3-hydroxyacyl-CoA. It can also use D-3-hydroxyacyl-CoA and cis-3-enoyl-CoA as substrate. This chain is Fatty acid oxidation complex subunit alpha, found in Photorhabdus laumondii subsp. laumondii (strain DSM 15139 / CIP 105565 / TT01) (Photorhabdus luminescens subsp. laumondii).